Consider the following 240-residue polypeptide: Phosphoribosylaminoimidazole-succinocarboxamide synthase (240 aa).

The protein belongs to the SAICAR synthetase family.

The catalysed reaction is 5-amino-1-(5-phospho-D-ribosyl)imidazole-4-carboxylate + L-aspartate + ATP = (2S)-2-[5-amino-1-(5-phospho-beta-D-ribosyl)imidazole-4-carboxamido]succinate + ADP + phosphate + 2 H(+). The protein operates within purine metabolism; IMP biosynthesis via de novo pathway; 5-amino-1-(5-phospho-D-ribosyl)imidazole-4-carboxamide from 5-amino-1-(5-phospho-D-ribosyl)imidazole-4-carboxylate: step 1/2. In Acidithiobacillus ferrooxidans (strain ATCC 23270 / DSM 14882 / CIP 104768 / NCIMB 8455) (Ferrobacillus ferrooxidans (strain ATCC 23270)), this protein is Phosphoribosylaminoimidazole-succinocarboxamide synthase.